Here is a 49-residue protein sequence, read N- to C-terminus: Osteocalcin (49 aa).

Residues 1-47 (YLDSGLGAPVPYPDPLEPKREVCELNPNCDELADHIGFQEAYQRFYG) form the Gla domain. Ca(2+) contacts are provided by Glu17, Glu21, Glu24, and Asp30. Glu17, Glu21, and Glu24 each carry 4-carboxyglutamate. Cysteines 23 and 29 form a disulfide.

This sequence belongs to the osteocalcin/matrix Gla protein family. Gamma-carboxyglutamate residues are formed by vitamin K dependent carboxylation by GGCX. These residues are essential for the binding of calcium. Decarboxylation promotes the hormone activity.

The protein localises to the secreted. Functionally, the carboxylated form is one of the main organic components of the bone matrix, which constitutes 1-2% of the total bone protein. It acts as a negative regulator of bone formation and is required to limit bone formation without impairing bone resorption or mineralization. The carboxylated form binds strongly to apatite and calcium. The uncarboxylated form acts as a hormone secreted by osteoblasts, which regulates different cellular processes, such as energy metabolism, male fertility and brain development. Regulates of energy metabolism by acting as a hormone favoring pancreatic beta-cell proliferation, insulin secretion and sensitivity and energy expenditure. Uncarboxylated osteocalcin hormone also promotes testosterone production in the testes: acts as a ligand for G protein-coupled receptor GPRC6A at the surface of Leydig cells, initiating a signaling response that promotes the expression of enzymes required for testosterone synthesis in a CREB-dependent manner. Also acts as a regulator of brain development: osteocalcin hormone crosses the blood-brain barrier and acts as a ligand for GPR158 on neurons, initiating a signaling response that prevents neuronal apoptosis in the hippocampus, favors the synthesis of all monoamine neurotransmitters and inhibits that of gamma-aminobutyric acid (GABA). Osteocalcin also crosses the placenta during pregnancy and maternal osteocalcin is required for fetal brain development. The chain is Osteocalcin (BGLAP) from Canis lupus familiaris (Dog).